The chain runs to 347 residues: GMP reductase (347 aa).

108-131 is an NADP(+) binding site; the sequence is ADFEKTKQILDLNPALNFVCIDVA. Residues G181 and G183 each contribute to the K(+) site. The Thioimidate intermediate role is filled by C186. Position 216 to 239 (216 to 239) interacts with NADP(+); sequence IISDGGCTTPGDVAKAFGGGADFV.

Belongs to the IMPDH/GMPR family. GuaC type 1 subfamily. In terms of assembly, homotetramer.

It catalyses the reaction IMP + NH4(+) + NADP(+) = GMP + NADPH + 2 H(+). In terms of biological role, catalyzes the irreversible NADPH-dependent deamination of GMP to IMP. It functions in the conversion of nucleobase, nucleoside and nucleotide derivatives of G to A nucleotides, and in maintaining the intracellular balance of A and G nucleotides. This chain is GMP reductase, found in Escherichia coli O157:H7.